The chain runs to 616 residues: Dihydroxy-acid dehydratase (616 aa).

Residue aspartate 81 participates in Mg(2+) binding. Cysteine 122 is a [2Fe-2S] cluster binding site. Aspartate 123 and lysine 124 together coordinate Mg(2+). Residue lysine 124 is modified to N6-carboxylysine. Cysteine 195 lines the [2Fe-2S] cluster pocket. Glutamate 491 is a Mg(2+) binding site. Catalysis depends on serine 517, which acts as the Proton acceptor.

This sequence belongs to the IlvD/Edd family. Homodimer. It depends on [2Fe-2S] cluster as a cofactor. Mg(2+) serves as cofactor.

It catalyses the reaction (2R)-2,3-dihydroxy-3-methylbutanoate = 3-methyl-2-oxobutanoate + H2O. The catalysed reaction is (2R,3R)-2,3-dihydroxy-3-methylpentanoate = (S)-3-methyl-2-oxopentanoate + H2O. The protein operates within amino-acid biosynthesis; L-isoleucine biosynthesis; L-isoleucine from 2-oxobutanoate: step 3/4. It functions in the pathway amino-acid biosynthesis; L-valine biosynthesis; L-valine from pyruvate: step 3/4. Functions in the biosynthesis of branched-chain amino acids. Catalyzes the dehydration of (2R,3R)-2,3-dihydroxy-3-methylpentanoate (2,3-dihydroxy-3-methylvalerate) into 2-oxo-3-methylpentanoate (2-oxo-3-methylvalerate) and of (2R)-2,3-dihydroxy-3-methylbutanoate (2,3-dihydroxyisovalerate) into 2-oxo-3-methylbutanoate (2-oxoisovalerate), the penultimate precursor to L-isoleucine and L-valine, respectively. The chain is Dihydroxy-acid dehydratase from Blochmanniella pennsylvanica (strain BPEN).